A 299-amino-acid polypeptide reads, in one-letter code: MIKVKVPGTTANMGPGFDSFGMALDIYNEITVEEIESGFEMLQEGELSEIPLAENLIYTTFLNTLNKHNYKYKGFRINLSKCDVPMSRGLGSSATCIVGGIFAANSIMGNVMSFDEIIKEAVSIEGHPDNVVPAIVGGMTVSIMDKDNVIYSNVTVPDRLRAFVMIPNYKLGTEEARGVLPDSYTREECVFNISRAAMLVNVMNNGEIEKLRLCMQDKIHQKYRGALIRNIDDIFKKAYEFGSLAEFISGSGSTLIAFIDKDNNEFYDRMKNFLDTLEDEWTVHLLKPNFTGAEIIKNR.

85–95 serves as a coordination point for ATP; sequence PMSRGLGSSAT.

This sequence belongs to the GHMP kinase family. Homoserine kinase subfamily.

The protein resides in the cytoplasm. The enzyme catalyses L-homoserine + ATP = O-phospho-L-homoserine + ADP + H(+). The protein operates within amino-acid biosynthesis; L-threonine biosynthesis; L-threonine from L-aspartate: step 4/5. Functionally, catalyzes the ATP-dependent phosphorylation of L-homoserine to L-homoserine phosphate. The sequence is that of Homoserine kinase from Clostridium novyi (strain NT).